Consider the following 198-residue polypeptide: Recombination protein RecR (198 aa).

The C4-type zinc-finger motif lies at 58–73 (CSVCGNYTDTDPCAIC). The Toprim domain occupies 81–175 (SLVCVVEEPK…KVTRIAHGIP (95 aa)).

This sequence belongs to the RecR family.

Its function is as follows. May play a role in DNA repair. It seems to be involved in an RecBC-independent recombinational process of DNA repair. It may act with RecF and RecO. This Clostridium acetobutylicum (strain ATCC 824 / DSM 792 / JCM 1419 / IAM 19013 / LMG 5710 / NBRC 13948 / NRRL B-527 / VKM B-1787 / 2291 / W) protein is Recombination protein RecR.